The chain runs to 861 residues: Rod cGMP-specific 3',5'-cyclic phosphodiesterase subunit alpha (861 aa).

Residue G2 is modified to N-acetylglycine. GAF domains follow at residues 73–222 and 254–431; these read QAER…NLIM and DIER…GWSV. The 334-residue stretch at 483–816 folds into the PDEase domain; that stretch reads EEEELAEILQ…KEWKALADEY (334 aa). H559 (proton donor) is an active-site residue. Residues H563, H599, D600, and D720 each contribute to the a divalent metal cation site. Positions 821 to 861 are disordered; that stretch reads KALEEEKQKQQTAKQGAAGDQPGGNPSPAGGAPASKSCCIQ. The span at 830–861 shows a compositional bias: low complexity; sequence QQTAKQGAAGDQPGGNPSPAGGAPASKSCCIQ. Residue C858 is modified to Cysteine methyl ester. The S-farnesyl cysteine moiety is linked to residue C858. Residues 859–861 constitute a propeptide, removed in mature form; the sequence is CIQ.

It belongs to the cyclic nucleotide phosphodiesterase family. As to quaternary structure, oligomer composed of two catalytic chains (alpha and beta), an inhibitory chain (gamma) and the delta chain. Requires a divalent metal cation as cofactor.

The protein resides in the cell membrane. The protein localises to the cell projection. It is found in the cilium. It localises to the photoreceptor outer segment. The catalysed reaction is 3',5'-cyclic GMP + H2O = GMP + H(+). Functionally, rod-specific cGMP phosphodiesterase that catalyzes the hydrolysis of 3',5'-cyclic GMP. This protein participates in processes of transmission and amplification of the visual signal. The chain is Rod cGMP-specific 3',5'-cyclic phosphodiesterase subunit alpha from Canis lupus familiaris (Dog).